The primary structure comprises 471 residues: UDP-N-acetylmuramate--L-alanine ligase (471 aa).

114–120 (GTHGKTT) is a binding site for ATP.

The protein belongs to the MurCDEF family.

The protein resides in the cytoplasm. It carries out the reaction UDP-N-acetyl-alpha-D-muramate + L-alanine + ATP = UDP-N-acetyl-alpha-D-muramoyl-L-alanine + ADP + phosphate + H(+). The protein operates within cell wall biogenesis; peptidoglycan biosynthesis. Cell wall formation. The sequence is that of UDP-N-acetylmuramate--L-alanine ligase from Brucella abortus (strain S19).